We begin with the raw amino-acid sequence, 860 residues long: Nuclear cap-binding protein complex subunit 1 (860 aa).

Residues 36–271 enclose the MIF4G domain; it reads CKDMLPDIRT…SNVKNALAND (236 aa).

Belongs to the NCBP1 family. Component of the nuclear cap-binding complex (CBC).

The protein resides in the nucleus. Functionally, component of the cap-binding complex (CBC) involved in the nuclear export of capped U snRNAs. The CBC complex is required for efficient pre-mRNA splicing through efficient commitment complex and spliceosome formation; and involved in rRNA processing at sites A0, A1 and A2. This chain is Nuclear cap-binding protein complex subunit 1 (CBC1), found in Eremothecium gossypii (strain ATCC 10895 / CBS 109.51 / FGSC 9923 / NRRL Y-1056) (Yeast).